Reading from the N-terminus, the 903-residue chain is Protein translocase subunit SecA (903 aa).

ATP-binding positions include Q87, 105–109, and D507; that span reads GEGKT. Disordered stretches follow at residues 565 to 584 and 855 to 877; these read ESRRIDNQLRGRSGRQGDPG and AEPGSALGDDEDNPLSPEALASQ. Residues C887, C889, C898, and H899 each contribute to the Zn(2+) site.

It belongs to the SecA family. As to quaternary structure, monomer and homodimer. Part of the essential Sec protein translocation apparatus which comprises SecA, SecYEG and auxiliary proteins SecDF-YajC and YidC. Requires Zn(2+) as cofactor.

The protein resides in the cell inner membrane. Its subcellular location is the cytoplasm. The enzyme catalyses ATP + H2O + cellular proteinSide 1 = ADP + phosphate + cellular proteinSide 2.. Part of the Sec protein translocase complex. Interacts with the SecYEG preprotein conducting channel. Has a central role in coupling the hydrolysis of ATP to the transfer of proteins into and across the cell membrane, serving both as a receptor for the preprotein-SecB complex and as an ATP-driven molecular motor driving the stepwise translocation of polypeptide chains across the membrane. This is Protein translocase subunit SecA from Chromobacterium violaceum (strain ATCC 12472 / DSM 30191 / JCM 1249 / CCUG 213 / NBRC 12614 / NCIMB 9131 / NCTC 9757 / MK).